The sequence spans 472 residues: Adenosylhomocysteinase (472 aa).

Substrate is bound by residues Thr-61, Asp-139, and Glu-198. Residue 199–201 (TTT) participates in NAD(+) binding. Substrate-binding residues include Lys-228 and Asp-232. NAD(+)-binding positions include Asn-233, 262 to 267 (GFGDVG), Glu-285, Asn-320, 341 to 343 (IGH), and Asn-386.

The protein belongs to the adenosylhomocysteinase family. NAD(+) is required as a cofactor.

The protein resides in the cytoplasm. The catalysed reaction is S-adenosyl-L-homocysteine + H2O = L-homocysteine + adenosine. Its pathway is amino-acid biosynthesis; L-homocysteine biosynthesis; L-homocysteine from S-adenosyl-L-homocysteine: step 1/1. In terms of biological role, may play a key role in the regulation of the intracellular concentration of adenosylhomocysteine. This is Adenosylhomocysteinase from Sphingopyxis alaskensis (strain DSM 13593 / LMG 18877 / RB2256) (Sphingomonas alaskensis).